A 267-amino-acid polypeptide reads, in one-letter code: tRNA-cytidine(32) 2-sulfurtransferase 2 (267 aa).

A PP-loop motif motif is present at residues 42–47; that stretch reads SGGKDS. [4Fe-4S] cluster is bound by residues Cys117, Cys120, and Cys208.

This sequence belongs to the TtcA family. Homodimer. Mg(2+) serves as cofactor. [4Fe-4S] cluster is required as a cofactor.

It localises to the cytoplasm. It carries out the reaction cytidine(32) in tRNA + S-sulfanyl-L-cysteinyl-[cysteine desulfurase] + AH2 + ATP = 2-thiocytidine(32) in tRNA + L-cysteinyl-[cysteine desulfurase] + A + AMP + diphosphate + H(+). The protein operates within tRNA modification. Catalyzes the ATP-dependent 2-thiolation of cytidine in position 32 of tRNA, to form 2-thiocytidine (s(2)C32). The sulfur atoms are provided by the cysteine/cysteine desulfurase (IscS) system. This is tRNA-cytidine(32) 2-sulfurtransferase 2 from Francisella tularensis subsp. holarctica (strain FTNF002-00 / FTA).